The chain runs to 118 residues: Large ribosomal subunit protein bL19 (118 aa).

Belongs to the bacterial ribosomal protein bL19 family.

This protein is located at the 30S-50S ribosomal subunit interface and may play a role in the structure and function of the aminoacyl-tRNA binding site. In Buchnera aphidicola subsp. Baizongia pistaciae (strain Bp), this protein is Large ribosomal subunit protein bL19.